A 178-amino-acid chain; its full sequence is Fatty-acid and retinol-binding protein 1 (178 aa).

An N-terminal signal peptide occupies residues M1 to A16. Coiled-coil stretches lie at residues D67 to N89 and I129 to T154.

Belongs to the fatty-acid and retinol-binding protein (FARBP) family. Post-translationally, not glycosylated.

It is found in the secreted. Functionally, binds retinol and different fatty acids. This Loa loa (Eye worm) protein is Fatty-acid and retinol-binding protein 1.